The following is a 479-amino-acid chain: Beta-amyrin 28-monooxygenase (479 aa).

A helical transmembrane segment spans residues 5–25 (FYLSLLLLFVTFISLSLFFIF). Cysteine 426 contacts heme.

This sequence belongs to the cytochrome P450 family. Heme is required as a cofactor. As to expression, expressed in roots, nodules and flowers.

The protein resides in the membrane. It carries out the reaction beta-amyrin + 3 reduced [NADPH--hemoprotein reductase] + 3 O2 = oleanolate + 3 oxidized [NADPH--hemoprotein reductase] + 4 H2O + 4 H(+). Its function is as follows. Catalyzes the carboxylation of beta-amyrin at the C-28 position to form oleanolic acid. Involved in an early step in the hemolytic saponin biosynthetic pathway. Catalyzes the carboxylation of alpha-amyrin and lupeol at the C-28 position to form ursolic acid and betulinic acid respectively. This is Beta-amyrin 28-monooxygenase from Medicago truncatula (Barrel medic).